The primary structure comprises 109 residues: Putative pterin-4-alpha-carbinolamine dehydratase (109 aa).

The protein belongs to the pterin-4-alpha-carbinolamine dehydratase family.

The catalysed reaction is (4aS,6R)-4a-hydroxy-L-erythro-5,6,7,8-tetrahydrobiopterin = (6R)-L-erythro-6,7-dihydrobiopterin + H2O. The chain is Putative pterin-4-alpha-carbinolamine dehydratase from Vibrio cholerae serotype O1 (strain ATCC 39315 / El Tor Inaba N16961).